The chain runs to 66 residues: Toxin Os1 (66 aa).

In terms of domain architecture, LCN-type CS-alpha/beta spans 2–66 (RDGYIVQLHN…PIKWLDPKCY (65 aa)). 4 cysteine pairs are disulfide-bonded: C12-C65, C16-C37, C22-C47, and C26-C49.

This sequence belongs to the long (4 C-C) scorpion toxin superfamily. Sodium channel inhibitor family. Alpha subfamily. Expressed by the venom gland.

Its subcellular location is the secreted. Functionally, alpha toxins bind voltage-independently at site-3 of sodium channels (Nav) and inhibit the inactivation of the activated channels, thereby blocking neuronal transmission. This toxin possesses a high paralytic activity against mice. The protein is Toxin Os1 of Orthochirus scrobiculosus (Central Asian scorpion).